The sequence spans 161 residues: Large ribosomal subunit protein mL50 (161 aa).

Residues 27 to 51 are disordered; the sequence is WGGHSKKEEKEVEENSIIPQEKKEP.

It belongs to the mitochondrion-specific ribosomal protein mL50 family. In terms of assembly, component of the mitochondrial ribosome large subunit (39S) which comprises a 16S rRNA and about 50 distinct proteins.

The protein resides in the mitochondrion. This Gallus gallus (Chicken) protein is Large ribosomal subunit protein mL50 (MRPL50).